The chain runs to 325 residues: L-lactate dehydrogenase 1 (325 aa).

Residues V17, D38, K43, Y68, and G82–A83 contribute to the NAD(+) site. Substrate contacts are provided by residues Q85, R91, and N123–D126. Residues A121–N123 and S146 each bind NAD(+). Position 151-154 (D151–R154) interacts with substrate. Beta-D-fructose 1,6-bisphosphate contacts are provided by R156 and H171. The active-site Proton acceptor is the H178. Y223 is modified (phosphotyrosine). T232 contributes to the substrate binding site.

It belongs to the LDH/MDH superfamily. LDH family. In terms of assembly, homotetramer.

The protein localises to the cytoplasm. The catalysed reaction is (S)-lactate + NAD(+) = pyruvate + NADH + H(+). It participates in fermentation; pyruvate fermentation to lactate; (S)-lactate from pyruvate: step 1/1. With respect to regulation, allosterically activated by fructose 1,6-bisphosphate (FBP). Catalyzes the conversion of lactate to pyruvate. This is L-lactate dehydrogenase 1 from Lactococcus lactis subsp. lactis (strain IL1403) (Streptococcus lactis).